Consider the following 186-residue polypeptide: Meiotically up-regulated gene 163 protein (186 aa).

It localises to the mitochondrion. Functionally, has a role in meiosis. This Schizosaccharomyces pombe (strain 972 / ATCC 24843) (Fission yeast) protein is Meiotically up-regulated gene 163 protein (mug163).